Consider the following 155-residue polypeptide: MSAAVKPLQIKILDPRLGTVWPLPTYATEASAGLDLRAALDAPMTLVPGDAELLSTGIAIHLVDPSLCAVVLPRSGLGHRHGIVLGNGTGLIDSDYQGPLLVSLWNRGREAFTIEPGDRIAQLVVLPIVRVVLQVVDTFVESGRGAGGFGHTGVR.

Substrate is bound by residues 74-76 (RSG), Asn-87, and 91-93 (LID).

It belongs to the dUTPase family. The cofactor is Mg(2+).

It carries out the reaction dUTP + H2O = dUMP + diphosphate + H(+). It functions in the pathway pyrimidine metabolism; dUMP biosynthesis; dUMP from dCTP (dUTP route): step 2/2. This enzyme is involved in nucleotide metabolism: it produces dUMP, the immediate precursor of thymidine nucleotides and it decreases the intracellular concentration of dUTP so that uracil cannot be incorporated into DNA. This chain is Deoxyuridine 5'-triphosphate nucleotidohydrolase, found in Xylella fastidiosa (strain M12).